An 83-amino-acid polypeptide reads, in one-letter code: Apolipoprotein C-I (83 aa).

The first 26 residues, 1–26 (MRLILSLPVLAVVLAMVLEGPAPAQA), serve as a signal peptide directing secretion.

It belongs to the apolipoprotein C1 family.

It localises to the secreted. Functionally, inhibitor of lipoprotein binding to the low density lipoprotein (LDL) receptor, LDL receptor-related protein, and very low density lipoprotein (VLDL) receptor. Associates with high density lipoproteins (HDL) and the triacylglycerol-rich lipoproteins in the plasma and makes up about 10% of the protein of the VLDL and 2% of that of HDL. Appears to interfere directly with fatty acid uptake and is also the major plasma inhibitor of cholesteryl ester transfer protein (CETP). Binds free fatty acids and reduces their intracellular esterification. Modulates the interaction of APOE with beta-migrating VLDL and inhibits binding of beta-VLDL to the LDL receptor-related protein. The chain is Apolipoprotein C-I (APOC1) from Eonycteris spelaea (Lesser dawn bat).